The primary structure comprises 112 residues: Colipase (112 aa).

Residues 1–17 form the signal peptide; the sequence is MKVLVVLLVTLVAVAYA. Residues 18-22 constitute a propeptide, enterostatin, activation peptide; that stretch reads APGPR. 5 disulfides stabilise this stretch: Cys-34/Cys-45, Cys-40/Cys-56, Cys-44/Cys-78, Cys-66/Cys-86, and Cys-80/Cys-104.

This sequence belongs to the colipase family. In terms of assembly, forms a 1:1 stoichiometric complex with pancreatic lipase. In terms of tissue distribution, expressed by the pancreas.

Its subcellular location is the secreted. Functionally, colipase is a cofactor of pancreatic lipase. It allows the lipase to anchor itself to the lipid-water interface. Without colipase the enzyme is washed off by bile salts, which have an inhibitory effect on the lipase. Enterostatin has a biological activity as a satiety signal. The chain is Colipase from Rattus norvegicus (Rat).